A 184-amino-acid chain; its full sequence is Ras-related protein Rap1 (184 aa).

10–17 contributes to the GTP binding site; that stretch reads GSGGVGKS. The short motif at 32-40 is the Effector region element; sequence YDPTIEDSY. GTP contacts are provided by residues 57 to 61 and 116 to 119; these read DTAGT and NKCD. A Cysteine methyl ester modification is found at C181. C181 carries S-geranylgeranyl cysteine lipidation. A propeptide spans 182–184 (removed in mature form); it reads VLL.

It belongs to the small GTPase superfamily. Ras family.

Its subcellular location is the cell membrane. The enzyme catalyses GTP + H2O = GDP + phosphate + H(+). Alternates between an inactive form bound to GDP and an active form bound to GTP. Activated by a guanine nucleotide-exchange factor (GEF) and inactivated by a GTPase-activating protein (GAP). Its function is as follows. Ras proteins bind GDP/GTP and possess intrinsic GTPase activity. Plays a role in photoreceptor cell determination. The sequence is that of Ras-related protein Rap1 from Drosophila melanogaster (Fruit fly).